A 1183-amino-acid polypeptide reads, in one-letter code: MDGWTEISRIAATTQPPKGPSPHIHEPASITSLKFDSVQNLIWCGDSFGYTRSFTPGPNSNGVNPYQQSLSFLPYTKFKSSLNNNPILQHLDHKDGILSLSSNCINFNNRRGLAKLSLSSDSFVDANSVLFKNLTSLTTNCNTMNDIVVGSNLSLLKFDLNKPSHLMSFNHDGNISIVNQTSKFLTLGKANGALELFDPVSNSSIKSFQGHTGLLSDLDVQGSYIATCGYSIRPRRYNHNSQNSNNDYMVDPLVNIYDVRMMRAVAPIPFPAGASCVRFHPKLPNIVLISSNSGQLQFVDIYDQTNVFLYQADLMPTSQPRQPSQLSKAPFMTNLEISENGDFFAFSDSYATMHLWTLNNSGSTITKDFVNFPASIEQPDVIIPPATEHIGVDDLVPLSTIGMPYYKDLLLSNYASDLSFTKELAKLPDPIDHDLLVESESHVGFFPYDKSKYGPANTAKKYQSLKERSNIHSTVNVPKFISERNNALTKTMSNTSLALQNLNKEHHNEIFQYKVPLSRKKIPNCYSRLQIQYSKFGVKDFDFSYYNRTDGLYCGLENDADNSYVNPLLQLYKFQPAFHNLMVRNLTNEWLPNDFETIITQKNPQGSSILNELGYLFDMMNKAKDKNVNMSNFSQVFKENRLAQTENLINLDEGAKLNSQALRNLIIGFNKFLIAEVYKDLMNQARDSSISSLMTVSYVMEVRGTGPSCPIYDKQFGSQLSLDLLTPPSNVLNKLSILLNPQINTQQQVVTPTTTRRNHNLITYLEYTINQFKTIPCQQHQHQYPHTLEVRSSITKLPPLLSLNVNLSNEEFKLINGFKKWLVPEFYALNNNNDAPIAFKPVLTQFDQDSTRYELLGYVCEISQQSDFSLGTHNLVSYVKIDGRWFLFNDFLVMQIPEEEVFNLSYPWKKPVILVYHDSSISGIPFDLFQIETFANLPGLNDSIIYRDHFAGSIRESHKKDYELLTRQEAPSLGTLIAIDAEFVNLRPEELEVRYDGHKKLIKPKFLSLARLSALRGDNGEKQGVAFIDDYVVHTGEIYDYLTSFSGIEPGDLDPINSEKNLVTLQTVYRKLWLLLNLGVVFVGHGLYNDFRGINLQVPQNQIRDTADFYYKSDFKRQLSLKFLAYVLLKEKVQTGNHDSIEDAYTALLLYKKYIEITATGEYESTLNYIYSEGQQLRFKVPE.

The tract at residues 1-24 is disordered; sequence MDGWTEISRIAATTQPPKGPSPHI. WD repeat units follow at residues 159 to 207, 269 to 309, and 327 to 366; these read DLNK…SIKS, PFPA…NVFL, and SKAP…STIT. Residues 369–520 are linker; it reads FVNFPASIEQ…FQYKVPLSRK (152 aa). A USP domain is found at 521 to 919; the sequence is KIPNCYSRLQ…KPVILVYHDS (399 aa). The 175-residue stretch at 977–1151 folds into the Exonuclease domain; the sequence is IAIDAEFVNL…EDAYTALLLY (175 aa). 4 residues coordinate a divalent metal cation: D980, E982, D1090, and D1143.

The protein belongs to the peptidase C19 family. PAN2 subfamily. As to quaternary structure, forms a heterotrimer with an asymmetric homodimer of the regulatory subunit PAN3 to form the poly(A)-nuclease (PAN) deadenylation complex. A divalent metal cation is required as a cofactor.

It localises to the cytoplasm. The catalysed reaction is Exonucleolytic cleavage of poly(A) to 5'-AMP.. Positively regulated by the regulatory subunit PAN3. Catalytic subunit of the poly(A)-nuclease (PAN) deadenylation complex, one of two cytoplasmic mRNA deadenylases involved in mRNA turnover. PAN specifically shortens poly(A) tails of RNA and the activity is stimulated by poly(A)-binding protein PAB1. PAN deadenylation is followed by rapid degradation of the shortened mRNA tails by the CCR4-NOT complex. Deadenylated mRNAs are then degraded by two alternative mechanisms, namely exosome-mediated 3'-5' exonucleolytic degradation, or deadenylation-dependent mRNA decaping and subsequent 5'-3' exonucleolytic degradation by XRN1. May also be involved in post-transcriptional maturation of mRNA poly(A) tails. In Scheffersomyces stipitis (strain ATCC 58785 / CBS 6054 / NBRC 10063 / NRRL Y-11545) (Yeast), this protein is PAN2-PAN3 deadenylation complex catalytic subunit PAN2.